The primary structure comprises 520 residues: Peptide chain release factor 3 (520 aa).

The tr-type G domain maps to 8–277 (ESRKTFAIIS…HAPMPNARQT (270 aa)). Residues 17 to 24 (SHPDAGKT), 85 to 89 (DTPGH), and 139 to 142 (NKLD) each bind GTP.

Belongs to the TRAFAC class translation factor GTPase superfamily. Classic translation factor GTPase family. PrfC subfamily.

The protein localises to the cytoplasm. In terms of biological role, increases the formation of ribosomal termination complexes and stimulates activities of RF-1 and RF-2. It binds guanine nucleotides and has strong preference for UGA stop codons. It may interact directly with the ribosome. The stimulation of RF-1 and RF-2 is significantly reduced by GTP and GDP, but not by GMP. This Staphylococcus epidermidis (strain ATCC 35984 / DSM 28319 / BCRC 17069 / CCUG 31568 / BM 3577 / RP62A) protein is Peptide chain release factor 3.